A 235-amino-acid polypeptide reads, in one-letter code: RING-H2 finger protein ATL17 (235 aa).

Residues 1–21 traverse the membrane as a helical segment; that stretch reads MLTTTILILLIVILMVSLHLY. An RING-type; atypical zinc finger spans residues 76–118; the sequence is CSVCLSEFKDNESGRVMPNCKHTFHVHCIDMWFHSHSSCPLCR. Residues 143–167 form a disordered region; it reads VYGDTNHHEGTETTGDSVPEDSQRK.

Belongs to the RING-type zinc finger family. ATL subfamily.

Its subcellular location is the membrane. The enzyme catalyses S-ubiquitinyl-[E2 ubiquitin-conjugating enzyme]-L-cysteine + [acceptor protein]-L-lysine = [E2 ubiquitin-conjugating enzyme]-L-cysteine + N(6)-ubiquitinyl-[acceptor protein]-L-lysine.. It participates in protein modification; protein ubiquitination. Functionally, may be involved in the early steps of the plant defense signaling pathway. The protein is RING-H2 finger protein ATL17 (ATL17) of Arabidopsis thaliana (Mouse-ear cress).